Here is a 720-residue protein sequence, read N- to C-terminus: Methionine--tRNA ligase (720 aa).

Residues 27-37 (PYANGQIHIGH) carry the 'HIGH' region motif. Zn(2+) is bound by residues C158, C161, C171, and C174. The short motif at 348–352 (KMSKS) is the 'KMSKS' region element. K351 lines the ATP pocket. In terms of domain architecture, tRNA-binding spans 614–720 (DFAKIDLRIA…SGAKPGMRVK (107 aa)).

The protein belongs to the class-I aminoacyl-tRNA synthetase family. MetG type 1 subfamily. Homodimer. Zn(2+) is required as a cofactor.

The protein localises to the cytoplasm. It catalyses the reaction tRNA(Met) + L-methionine + ATP = L-methionyl-tRNA(Met) + AMP + diphosphate. Its function is as follows. Is required not only for elongation of protein synthesis but also for the initiation of all mRNA translation through initiator tRNA(fMet) aminoacylation. This is Methionine--tRNA ligase from Burkholderia lata (strain ATCC 17760 / DSM 23089 / LMG 22485 / NCIMB 9086 / R18194 / 383).